The chain runs to 279 residues: Shikimate dehydrogenase (NADP(+)) (279 aa).

Shikimate is bound by residues 19-21 (SRS) and Thr-66. The active-site Proton acceptor is the Lys-70. Shikimate is bound by residues Asn-91 and Asp-106. NADP(+) is bound by residues 129 to 133 (GAGGA), 152 to 157 (NRTLER), and Ile-218. A shikimate-binding site is contributed by Tyr-220. Gly-241 contacts NADP(+).

Belongs to the shikimate dehydrogenase family. Homodimer.

The enzyme catalyses shikimate + NADP(+) = 3-dehydroshikimate + NADPH + H(+). It functions in the pathway metabolic intermediate biosynthesis; chorismate biosynthesis; chorismate from D-erythrose 4-phosphate and phosphoenolpyruvate: step 4/7. Involved in the biosynthesis of the chorismate, which leads to the biosynthesis of aromatic amino acids. Catalyzes the reversible NADPH linked reduction of 3-dehydroshikimate (DHSA) to yield shikimate (SA). This Gluconobacter oxydans (strain 621H) (Gluconobacter suboxydans) protein is Shikimate dehydrogenase (NADP(+)).